Consider the following 138-residue polypeptide: Nucleoside diphosphate kinase (138 aa).

ATP is bound by residues K11, F59, R87, T93, R104, and N114. H117 (pros-phosphohistidine intermediate) is an active-site residue.

The protein belongs to the NDK family. The cofactor is Mg(2+).

It localises to the cytoplasm. The catalysed reaction is a 2'-deoxyribonucleoside 5'-diphosphate + ATP = a 2'-deoxyribonucleoside 5'-triphosphate + ADP. The enzyme catalyses a ribonucleoside 5'-diphosphate + ATP = a ribonucleoside 5'-triphosphate + ADP. Major role in the synthesis of nucleoside triphosphates other than ATP. The ATP gamma phosphate is transferred to the NDP beta phosphate via a ping-pong mechanism, using a phosphorylated active-site intermediate. The polypeptide is Nucleoside diphosphate kinase (Saccharolobus solfataricus (strain ATCC 35092 / DSM 1617 / JCM 11322 / P2) (Sulfolobus solfataricus)).